The following is a 677-amino-acid chain: Methionine--tRNA ligase (677 aa).

The short motif at 15–25 (PYANGSIHLGH) is the 'HIGH' region element. The Zn(2+) site is built by cysteine 146, cysteine 149, cysteine 159, and cysteine 162. The 'KMSKS' region signature appears at 333–337 (KMSKS). ATP is bound at residue lysine 336. The tRNA-binding domain maps to 575–677 (DFAKVDLRVA…EGAKPGQQVK (103 aa)).

This sequence belongs to the class-I aminoacyl-tRNA synthetase family. MetG type 1 subfamily. In terms of assembly, homodimer. Zn(2+) is required as a cofactor.

It is found in the cytoplasm. The catalysed reaction is tRNA(Met) + L-methionine + ATP = L-methionyl-tRNA(Met) + AMP + diphosphate. Is required not only for elongation of protein synthesis but also for the initiation of all mRNA translation through initiator tRNA(fMet) aminoacylation. This Enterobacter sp. (strain 638) protein is Methionine--tRNA ligase.